A 179-amino-acid chain; its full sequence is Large ribosomal subunit protein uL5 (179 aa).

The protein belongs to the universal ribosomal protein uL5 family. In terms of assembly, part of the 50S ribosomal subunit; part of the 5S rRNA/L5/L18/L25 subcomplex. Contacts the 5S rRNA and the P site tRNA. Forms a bridge to the 30S subunit in the 70S ribosome.

This is one of the proteins that bind and probably mediate the attachment of the 5S RNA into the large ribosomal subunit, where it forms part of the central protuberance. In the 70S ribosome it contacts protein S13 of the 30S subunit (bridge B1b), connecting the 2 subunits; this bridge is implicated in subunit movement. Contacts the P site tRNA; the 5S rRNA and some of its associated proteins might help stabilize positioning of ribosome-bound tRNAs. This is Large ribosomal subunit protein uL5 from Bacillus mycoides (strain KBAB4) (Bacillus weihenstephanensis).